The sequence spans 499 residues: Probable folate-biopterin transporter 2 (499 aa).

The next 12 membrane-spanning stretches (helical) occupy residues Trp-43–Leu-63, Ile-92–Phe-112, Pro-116–Ser-136, Tyr-141–Ile-161, Leu-185–Val-205, Gly-209–Ser-229, Leu-266–Phe-286, Phe-302–Leu-322, Leu-330–Phe-350, Leu-354–Ile-374, Phe-399–Ile-419, and Trp-435–Val-455.

It belongs to the major facilitator superfamily. Folate-biopterin transporter (TC 2.A.71) family.

It localises to the membrane. In terms of biological role, could mediate folate transport. The chain is Probable folate-biopterin transporter 2 from Arabidopsis thaliana (Mouse-ear cress).